The chain runs to 146 residues: Hemoglobin subunit beta-1 (146 aa).

Serine 1 is modified (N-acetylserine). Residues phenylalanine 2–histidine 146 enclose the Globin domain. Lysine 17 is subject to N6-succinyllysine. Phosphoserine is present on residues serine 44 and serine 50. Lysine 59 carries the N6-succinyllysine modification. Heme b is bound by residues histidine 63 and histidine 92. Arginine 104 bears the Asymmetric dimethylarginine mark.

Belongs to the globin family. Heterotetramer of two alpha chains and two beta chains. As to expression, red blood cells.

Functionally, involved in oxygen transport from the lung to the various peripheral tissues. The sequence is that of Hemoglobin subunit beta-1 (HBB1) from Panthera leo (Lion).